A 122-amino-acid polypeptide reads, in one-letter code: Small ribosomal subunit protein bS6 (122 aa).

It belongs to the bacterial ribosomal protein bS6 family.

In terms of biological role, binds together with bS18 to 16S ribosomal RNA. The sequence is that of Small ribosomal subunit protein bS6 from Trichlorobacter lovleyi (strain ATCC BAA-1151 / DSM 17278 / SZ) (Geobacter lovleyi).